A 128-amino-acid polypeptide reads, in one-letter code: Small ribosomal subunit protein uS9c (128 aa).

Belongs to the universal ribosomal protein uS9 family.

The protein resides in the plastid. The polypeptide is Small ribosomal subunit protein uS9c (rps9) (Euglena longa (Euglenophycean alga)).